Consider the following 310-residue polypeptide: tRNA-cytidine(32) 2-sulfurtransferase (310 aa).

The short motif at 45-50 is the PP-loop motif element; that stretch reads SGGKDS. Residues Cys-120, Cys-123, and Cys-211 each coordinate [4Fe-4S] cluster.

The protein belongs to the TtcA family. Homodimer. The cofactor is Mg(2+). [4Fe-4S] cluster serves as cofactor.

It is found in the cytoplasm. It carries out the reaction cytidine(32) in tRNA + S-sulfanyl-L-cysteinyl-[cysteine desulfurase] + AH2 + ATP = 2-thiocytidine(32) in tRNA + L-cysteinyl-[cysteine desulfurase] + A + AMP + diphosphate + H(+). It functions in the pathway tRNA modification. Its function is as follows. Catalyzes the ATP-dependent 2-thiolation of cytidine in position 32 of tRNA, to form 2-thiocytidine (s(2)C32). The sulfur atoms are provided by the cysteine/cysteine desulfurase (IscS) system. In Shewanella baltica (strain OS185), this protein is tRNA-cytidine(32) 2-sulfurtransferase.